We begin with the raw amino-acid sequence, 669 residues long: DNA ligase (669 aa).

Residues 32-36 (DAEYD), 81-82 (SL), and Glu-111 contribute to the NAD(+) site. Residue Lys-113 is the N6-AMP-lysine intermediate of the active site. Positions 134, 171, 290, and 314 each coordinate NAD(+). Residues Cys-408, Cys-411, Cys-426, and Cys-432 each contribute to the Zn(2+) site. Positions 591–669 (EEALSLKGQT…EAELLAILGS (79 aa)) constitute a BRCT domain.

This sequence belongs to the NAD-dependent DNA ligase family. LigA subfamily. Mg(2+) serves as cofactor. Requires Mn(2+) as cofactor.

It catalyses the reaction NAD(+) + (deoxyribonucleotide)n-3'-hydroxyl + 5'-phospho-(deoxyribonucleotide)m = (deoxyribonucleotide)n+m + AMP + beta-nicotinamide D-nucleotide.. In terms of biological role, DNA ligase that catalyzes the formation of phosphodiester linkages between 5'-phosphoryl and 3'-hydroxyl groups in double-stranded DNA using NAD as a coenzyme and as the energy source for the reaction. It is essential for DNA replication and repair of damaged DNA. The polypeptide is DNA ligase (Shewanella loihica (strain ATCC BAA-1088 / PV-4)).